A 211-amino-acid chain; its full sequence is Large ribosomal subunit protein bL25 (211 aa).

The segment at 188–211 (HREEEKAPEETGEAAPAPTPETGQ) is disordered. Over residues 200–211 (EAAPAPTPETGQ) the composition is skewed to low complexity.

Belongs to the bacterial ribosomal protein bL25 family. CTC subfamily. In terms of assembly, part of the 50S ribosomal subunit; part of the 5S rRNA/L5/L18/L25 subcomplex. Contacts the 5S rRNA. Binds to the 5S rRNA independently of L5 and L18.

In terms of biological role, this is one of the proteins that binds to the 5S RNA in the ribosome where it forms part of the central protuberance. The sequence is that of Large ribosomal subunit protein bL25 from Desulforudis audaxviator (strain MP104C).